The primary structure comprises 1127 residues: Structural protein MDM1 (1127 aa).

In terms of domain architecture, PXA spans 85 to 273; that stretch reads NAQIGKELES…WNLRIVSLSQ (189 aa). A phosphoserine mark is found at S670, S673, and S692. Positions 705–762 form a coiled coil; sequence SNNFRDNIASLTISIDQIEKELELLRHLILKADLTNNQMQLKILKKSQRTLLKELEMK. Residues 782–905 enclose the PX domain; that stretch reads TKIYIRSYFS…RFLTDPTPFK (124 aa).

This sequence belongs to the sorting nexin family.

It localises to the cytoplasm. Essential for mitotic growth. Mediates organelle inheritance. The protein is Structural protein MDM1 (MDM1) of Saccharomyces cerevisiae (strain ATCC 204508 / S288c) (Baker's yeast).